The chain runs to 333 residues: Cytochrome f (333 aa).

The N-terminal stretch at 1–44 (MRNACTRARLTRTARAMVKTLFIAIASVTFFFTSDLALPQSAAA) is a signal peptide. Tyrosine 45, cysteine 66, cysteine 69, and histidine 70 together coordinate heme. A helical membrane pass occupies residues 299–318 (VGWLIAFVALVMLAQVMLVL).

It belongs to the cytochrome f family. As to quaternary structure, the 4 large subunits of the cytochrome b6-f complex are cytochrome b6, subunit IV (17 kDa polypeptide, PetD), cytochrome f and the Rieske protein, while the 4 small subunits are PetG, PetL, PetM and PetN. The complex functions as a dimer. The cofactor is heme.

It localises to the cellular thylakoid membrane. Its function is as follows. Component of the cytochrome b6-f complex, which mediates electron transfer between photosystem II (PSII) and photosystem I (PSI), cyclic electron flow around PSI, and state transitions. This Nostoc sp. (strain PCC 7120 / SAG 25.82 / UTEX 2576) protein is Cytochrome f.